The chain runs to 416 residues: Vacuole membrane protein KMS2 (416 aa).

An N-acetylglycine modification is found at Gly-2. At 2–59 the chain is on the cytoplasmic side; the sequence is GYGNRASSKTPAISGLREKHQQDLEKLTLTSQPFKTLRLFVVAVFLYVRRWSSYLLAN. The chain crosses the membrane as a helical span at residues 60-80; sequence VGWLILFCSIFVAFAALLVTL. At 81-100 the chain is on the lumenal side; sequence DGPHVKHVEELSEYTRFGLW. The helical transmembrane segment at 101-123 threads the bilayer; that stretch reads WIFLGVASSIGLGSGLHTFVLYL. Over 124–249 the chain is Cytoplasmic; the sequence is GPHIALFTIK…WLLSHSQYLN (126 aa). The helical transmembrane segment at 250-270 threads the bilayer; it reads FFTILILASVPNPLFDLAGIM. Residues 271 to 281 lie on the Lumenal side of the membrane; it reads CGQFEKPFWEF. The helical transmembrane segment at 282-304 threads the bilayer; it reads FLATLIGKAIIKTHIQTVFIICV. Residues 305–315 are Cytoplasmic-facing; it reads CNNQLLDWVEN. Residues 316-336 traverse the membrane as a helical segment; sequence ELIYILSFVPGFASALPELTA. The Lumenal portion of the chain corresponds to 337–364; that stretch reads KLRLMKEKYLIASPPVSSDINVKKWDLS. Residues 365–385 form a helical membrane-spanning segment; it reads FASVWNGVVWLMLLNFFGQIV. The Cytoplasmic segment spans residues 386–416; the sequence is TSTAQRYLKKQQEEELDALTNKSSLTSKKSK.

This sequence belongs to the VMP1 family.

The protein localises to the endoplasmic reticulum membrane. Involved in the early secretory pathway. Required for the correct export of secretory products from the endoplasmic reticulum (ER) and involved in the maintenance of ER integrity. The sequence is that of Vacuole membrane protein KMS2 from Arabidopsis thaliana (Mouse-ear cress).